Consider the following 515-residue polypeptide: Calcium-dependent protein kinase 2 (515 aa).

The tract at residues 1–51 (MGNCCPGSGDAEPASSDASTGNGSSSFKAGASPSSAPAQNKPPAPIGPVLG) is disordered. Gly-2 is lipidated: N-myristoyl glycine. The segment covering 14-38 (ASSDASTGNGSSSFKAGASPSSAPA) has biased composition (low complexity). Positions 61–319 (YTIGKELGRG…AYEVLNHPWI (259 aa)) constitute a Protein kinase domain. ATP is bound by residues 67–75 (LGRGQFGVT) and Lys-90. Asp-185 serves as the catalytic Proton acceptor. The autoinhibitory domain stretch occupies residues 325–355 (APDTPLDNAVMNRLKQFRAMNQFKKAALRVI). EF-hand domains lie at 362–397 (EEIR…QGTK), 398–433 (LTEA…MNRM), 434–469 (DREE…KGLL), and 473–504 (DIKD…GNPE). The Ca(2+) site is built by Asp-375, Asp-377, Ser-379, Thr-381, Glu-386, Asp-411, Asp-413, Asn-415, Thr-417, Glu-422, Asp-447, Asp-449, Ser-451, Cys-453, Glu-458, Asp-482, Asp-484, Asp-486, Arg-488, and Glu-493.

Belongs to the protein kinase superfamily. Ser/Thr protein kinase family. CDPK subfamily. As to expression, expressed in heading panicles, spikelets and mature pollen grains.

It is found in the membrane. It carries out the reaction L-seryl-[protein] + ATP = O-phospho-L-seryl-[protein] + ADP + H(+). It catalyses the reaction L-threonyl-[protein] + ATP = O-phospho-L-threonyl-[protein] + ADP + H(+). Activated by calcium. Autophosphorylation may play an important role in the regulation of the kinase activity. Its function is as follows. May play a role in signal transduction pathways that involve calcium as a second messenger. This chain is Calcium-dependent protein kinase 2, found in Oryza sativa subsp. japonica (Rice).